A 598-amino-acid chain; its full sequence is Ecto-NOX disulfide-thiol exchanger 2 (598 aa).

The RRM domain occupies 99-178; the sequence is KTVFVGGLPE…GRLHVDFAQA (80 aa). 2 coiled-coil regions span residues 264–299 and 352–476; these read IQSA…LSGI and RREE…KQEN.

This sequence belongs to the ENOX family. It depends on Cu cation as a cofactor. Glycosylated.

It is found in the cell membrane. It localises to the secreted. Its subcellular location is the extracellular space. With respect to regulation, inhibited by the antitumor sulfonylurea LY181984, the vabilloid capsaicin, and retinoids. Functionally, may be involved in cell growth. Probably acts as a terminal oxidase of plasma electron transport from cytosolic NAD(P)H via hydroquinones to acceptors at the cell surface. Hydroquinone oxidase activity alternates with a protein disulfide-thiol interchange/oxidoreductase activity which may control physical membrane displacements associated with vesicle budding or cell enlargement. The activities oscillate with a period length of 22 minutes and play a role in control of the ultradian cellular biological clock. In Mus musculus (Mouse), this protein is Ecto-NOX disulfide-thiol exchanger 2 (Enox2).